The primary structure comprises 1203 residues: ATP-dependent helicase/nuclease subunit A (1203 aa).

The 469-residue stretch at 4-472 (VKLTPEQNEA…IRLKENFRSR (469 aa)) folds into the UvrD-like helicase ATP-binding domain. 25 to 32 (ASAGSGKT) provides a ligand contact to ATP. One can recognise a UvrD-like helicase C-terminal domain in the interval 503–785 (VQGNITDYPV…RVMTFHKSKG (283 aa)).

It belongs to the helicase family. AddA subfamily. In terms of assembly, heterodimer of AddA and AddB/RexB. Requires Mg(2+) as cofactor.

It carries out the reaction Couples ATP hydrolysis with the unwinding of duplex DNA by translocating in the 3'-5' direction.. The enzyme catalyses ATP + H2O = ADP + phosphate + H(+). Its function is as follows. The heterodimer acts as both an ATP-dependent DNA helicase and an ATP-dependent, dual-direction single-stranded exonuclease. Recognizes the chi site generating a DNA molecule suitable for the initiation of homologous recombination. The AddA nuclease domain is required for chi fragment generation; this subunit has the helicase and 3' -&gt; 5' nuclease activities. The protein is ATP-dependent helicase/nuclease subunit A of Lactococcus lactis subsp. lactis (strain IL1403) (Streptococcus lactis).